A 725-amino-acid polypeptide reads, in one-letter code: Catalase-peroxidase 1 (725 aa).

Residues 96–224 (WHSAGSYRLA…LAAVQMGLIY (129 aa)) constitute a cross-link (tryptophyl-tyrosyl-methioninium (Trp-Tyr) (with M-250)). The Proton acceptor role is filled by H97. Residues 224–250 (YVNPEGVDGNPDPLRTAKDVRETFKRM) constitute a cross-link (tryptophyl-tyrosyl-methioninium (Tyr-Met) (with W-96)). H265 lines the heme b pocket.

It belongs to the peroxidase family. Peroxidase/catalase subfamily. As to quaternary structure, homodimer or homotetramer. It depends on heme b as a cofactor. In terms of processing, formation of the three residue Trp-Tyr-Met cross-link is important for the catalase, but not the peroxidase activity of the enzyme.

The enzyme catalyses H2O2 + AH2 = A + 2 H2O. The catalysed reaction is 2 H2O2 = O2 + 2 H2O. Bifunctional enzyme with both catalase and broad-spectrum peroxidase activity. The protein is Catalase-peroxidase 1 of Idiomarina loihiensis (strain ATCC BAA-735 / DSM 15497 / L2-TR).